Consider the following 298-residue polypeptide: TLR adapter interacting with SLC15A4 on the lysosome (298 aa).

The pLxIS motif motif lies at 287-291 (SLHIS). Position 291 is a phosphoserine (Ser-291).

As to quaternary structure, interacts (via pLxIS motif) with IRF5; leading to IRF5 activation. Interacts with SLC15A4; leading to its recruitment to endolysosome. Post-translationally, the phosphorylated pLxIS motif constitutes an IRF5-binding motif, leading to recruitment of the transcription factor IRF5 to induce type-I interferons and other cytokines.

The protein resides in the lysosome membrane. The protein localises to the endosome membrane. It is found in the nucleus. Its subcellular location is the cytoplasm. Its function is as follows. Innate immune adapter that mediates the recruitment and activation of IRF5 downstream of endolysosomal toll-like receptors TLR7, TLR8 and TLR9. Following recruitment to endolysosome by SLC15A4 downstream of TLR7, TLR8 and TLR9, specifically recruits IRF5 transcription factor via its pLxIS motif, leading to IRF5 activation and subsequent expression of type I interferons. Plays a role in the regulation of endolysosomal pH in immune cells such as B-cells, dendritic cells and monocytes. The chain is TLR adapter interacting with SLC15A4 on the lysosome from Mus musculus (Mouse).